The chain runs to 551 residues: ATP-dependent DNA helicase XPD (551 aa).

Positions 1–228 (MLKLRDWQEK…KLLNQLREVV (228 aa)) constitute a Helicase ATP-binding domain. 29 to 36 (APTGSGKT) contacts ATP. 4 residues coordinate [4Fe-4S] cluster: cysteine 88, cysteine 102, cysteine 105, and cysteine 137. Positions 180 to 183 (DEAH) match the DEAH box motif.

The protein belongs to the helicase family. RAD3/XPD subfamily. In terms of assembly, monomer. It depends on [4Fe-4S] cluster as a cofactor.

The catalysed reaction is Couples ATP hydrolysis with the unwinding of duplex DNA at the replication fork by translocating in the 5'-3' direction. This creates two antiparallel DNA single strands (ssDNA). The leading ssDNA polymer is the template for DNA polymerase III holoenzyme which synthesizes a continuous strand.. The enzyme catalyses ATP + H2O = ADP + phosphate + H(+). ATP-dependent 5'-3' DNA helicase. Thought to be involved in nucleotide excision repair (NER) of DNA. This chain is ATP-dependent DNA helicase XPD, found in Sulfolobus acidocaldarius (strain ATCC 33909 / DSM 639 / JCM 8929 / NBRC 15157 / NCIMB 11770).